A 331-amino-acid chain; its full sequence is Phosphoenolpyruvate transferase (331 aa).

Asp63 contacts 7,8-didemethyl-8-hydroxy-5-deazariboflavin.

The protein belongs to the CofD family. In terms of assembly, homodimer. It depends on Mg(2+) as a cofactor.

The catalysed reaction is enolpyruvoyl-2-diphospho-5'-guanosine + 7,8-didemethyl-8-hydroxy-5-deazariboflavin = dehydro coenzyme F420-0 + GMP + H(+). It functions in the pathway cofactor biosynthesis; coenzyme F420 biosynthesis. Functionally, catalyzes the transfer of the phosphoenolpyruvate moiety from enoylpyruvoyl-2-diphospho-5'-guanosine (EPPG) to 7,8-didemethyl-8-hydroxy-5-deazariboflavin (FO) with the formation of dehydro coenzyme F420-0 and GMP. In Mycobacterium sp. (strain KMS), this protein is Phosphoenolpyruvate transferase.